We begin with the raw amino-acid sequence, 867 residues long: Alanine--tRNA ligase (867 aa).

4 residues coordinate Zn(2+): H558, H562, C660, and H664.

It belongs to the class-II aminoacyl-tRNA synthetase family. The cofactor is Zn(2+).

The protein resides in the cytoplasm. It carries out the reaction tRNA(Ala) + L-alanine + ATP = L-alanyl-tRNA(Ala) + AMP + diphosphate. Functionally, catalyzes the attachment of alanine to tRNA(Ala) in a two-step reaction: alanine is first activated by ATP to form Ala-AMP and then transferred to the acceptor end of tRNA(Ala). Also edits incorrectly charged Ser-tRNA(Ala) and Gly-tRNA(Ala) via its editing domain. The sequence is that of Alanine--tRNA ligase from Fervidobacterium nodosum (strain ATCC 35602 / DSM 5306 / Rt17-B1).